The sequence spans 101 residues: Apolipoprotein C-II (101 aa).

Positions 1–26 (MGTRYFLALFLILLVLGFKVQGVAMA) are cleaved as a signal peptide. The interval 66-74 (TMDEKIRDI) is lipid binding. Residues 78–101 (STAAVTTYAGIFTDQLLSLLKGDQ) form a lipoprotein lipase cofactor region.

The protein belongs to the apolipoprotein C2 family. Post-translationally, proapolipoprotein C-II is synthesized as a sialic acid containing glycoprotein which is subsequently desialylated prior to its proteolytic processing. Proapolipoprotein C-II undergoes proteolytic cleavage of its N-terminal hexapeptide to generate apolipoprotein C-II. In bovine, proapolipoprotein C-II was found to be the minor form whereas apolipoprotein C-II was found to be the major form in plasma.

Its subcellular location is the secreted. Functionally, component of chylomicrons, very low-density lipoproteins (VLDL), low-density lipoproteins (LDL), and high-density lipoproteins (HDL) in plasma. Plays an important role in lipoprotein metabolism as an activator of lipoprotein lipase. Both proapolipoprotein C-II and apolipoprotein C-II can activate lipoprotein lipase. The chain is Apolipoprotein C-II (APOC2) from Camelus dromedarius (Dromedary).